The following is a 468-amino-acid chain: uncharacterized protein (468 aa).

A run of 12 helical transmembrane segments spans residues Leu13–Phe33, Leu40–Leu60, Ala76–Ile96, Leu112–Gly132, Phe141–Ala161, Leu194–Leu214, Val237–Thr257, Pro260–Gln280, Cys328–Ile348, Phe354–Gly374, Ile414–Val434, and Ala443–Ile463.

Belongs to the NhaC Na(+)/H(+) (TC 2.A.35) antiporter family.

It localises to the cell membrane. This is an uncharacterized protein from Haemophilus influenzae (strain ATCC 51907 / DSM 11121 / KW20 / Rd).